The chain runs to 969 residues: RNA polymerase-associated protein RapA (969 aa).

The Helicase ATP-binding domain occupies 164–334 (EVGRRYAPRV…FARLRLLDPD (171 aa)). Residue 177–184 (DEVGLGKT) participates in ATP binding. A DEAH box motif is present at residues 280–283 (DEAH). Residues 492 to 672 (RVNWLLELLK…GLEPLIEESA (181 aa)) form the Helicase C-terminal domain.

This sequence belongs to the SNF2/RAD54 helicase family. RapA subfamily. Interacts with the RNAP. Has a higher affinity for the core RNAP than for the holoenzyme. Its ATPase activity is stimulated by binding to RNAP.

Transcription regulator that activates transcription by stimulating RNA polymerase (RNAP) recycling in case of stress conditions such as supercoiled DNA or high salt concentrations. Probably acts by releasing the RNAP, when it is trapped or immobilized on tightly supercoiled DNA. Does not activate transcription on linear DNA. Probably not involved in DNA repair. This chain is RNA polymerase-associated protein RapA, found in Aliivibrio salmonicida (strain LFI1238) (Vibrio salmonicida (strain LFI1238)).